The following is a 449-amino-acid chain: Heterogeneous nuclear ribonucleoprotein H (449 aa).

At methionine 1 the chain carries N-acetylmethionine; in Heterogeneous nuclear ribonucleoprotein H; alternate. An N-acetylmethionine; in Heterogeneous nuclear ribonucleoprotein H, N-terminally processed modification is found at methionine 2. The region spanning 11-90 (FVVKVRGLPW…RYVEVFKSNN (80 aa)) is the RRM 1 domain. Phosphoserine is present on serine 23. Residue lysine 35 forms a Glycyl lysine isopeptide (Lys-Gly) (interchain with G-Cter in SUMO2) linkage. Phosphoserine is present on residues serine 54 and serine 63. Glycyl lysine isopeptide (Lys-Gly) (interchain with G-Cter in SUMO2) cross-links involve residues lysine 87 and lysine 98. One can recognise an RRM 2 domain in the interval 111–188 (GFVRLRGLPF…RYIEIFKSSR (78 aa)). Position 233 is a dimethylated arginine; alternate (arginine 233). Arginine 233 is subject to Omega-N-methylarginine; alternate. One copy of the 1-1 repeat lies at 234–249 (GAYGGGYGGYDDYNGY). The interval 234–433 (GAYGGGYGGY…YGGQSSMSGY (200 aa)) is 2 X 16 AA Gly-rich approximate repeats. Tyrosine 246 is modified (phosphotyrosine). Positions 289-364 (HCVHMRGLPY…RYVELFLNST (76 aa)) constitute an RRM 3 domain. At serine 310 the chain carries Phosphoserine. 3 consecutive repeat copies span residues 354–372 (HRYVELFLNSTAGASGGAY), 374–392 (HRYVELFLNSTAGASGGAY), and 418–433 (GGYGGGYGGQSSMSGY). The interval 354–392 (HRYVELFLNSTAGASGGAYEHRYVELFLNSTAGASGGAY) is 2 X 19 AA perfect repeats.

In terms of assembly, part of a ternary complex containing FUBP2, PTBP1, PTBP2 and HNRNPH1. Identified in the spliceosome C complex. Interacts with IGF2BP1. Interacts with CUGBP1; the interaction is RNA-dependent. Interacts with MBNL1; the interaction in RNA-independent. In terms of tissue distribution, expressed ubiquitously.

The protein localises to the nucleus. Its subcellular location is the nucleoplasm. Functionally, this protein is a component of the heterogeneous nuclear ribonucleoprotein (hnRNP) complexes which provide the substrate for the processing events that pre-mRNAs undergo before becoming functional, translatable mRNAs in the cytoplasm. Mediates pre-mRNA alternative splicing regulation. Inhibits, together with CUGBP1, insulin receptor (IR) pre-mRNA exon 11 inclusion in myoblast. Binds to the IR RNA. Binds poly(RG). The chain is Heterogeneous nuclear ribonucleoprotein H (HNRNPH1) from Homo sapiens (Human).